The chain runs to 206 residues: U-scoloptoxin(08)-Cw1a (206 aa).

The N-terminal stretch at 1-24 (MIFRVNLLFSCFCFVLFVFDFSNA) is a signal peptide. Residues 25 to 164 (SKYDQGSLNI…DLPELKRRKR (140 aa)) constitute a propeptide that is removed on maturation. The stretch at 37–43 (RLWRDWE) is one RLWRNWE 1; approximate repeat. The stretch at 71 to 77 (RLWRDWE) is one RLWRNWE 2; approximate repeat. Residues 104–110 (RLWRDWE) form an RLWRNWE 3; approximate repeat. Residues 137-143 (RLWRNWE) form an RLWRNWE 4 repeat. The stretch at 164-170 (RLWRNED) is one RLWRNWE 5; approximate repeat.

It belongs to the scoloptoxin-08 family. In terms of processing, contains 3 disulfide bonds. In terms of tissue distribution, expressed by the venom gland.

It is found in the secreted. The sequence is that of U-scoloptoxin(08)-Cw1a from Cormocephalus westwoodi (Westwood's green centipede).